Here is a 760-residue protein sequence, read N- to C-terminus: MGSFLRSFRNNAGSTTPSVGAVPAKKEVPIPPMTPLEKRLLDMGSIRGDGSDKFYGMENYGNTCYCNSILQCLYYSVPFREAVINYPTRTPIESLEAALAKSLRYPNPNAHLEAEAQAEKQRAANAQRPGMPPAQPQKPEDKDSPDYKKKMALQTLPLLEAQNNATSYGMSESLFTSLKDIFESVVGSQSRIGIVRPQQFLDVLRRDHEMFRTAMHQDAHEFLNLLLNEVVANVEAEASKQPAAIEKSLPAPDHAETVDQSASSGSKTPNTTRWVHELFEGTLTSETQCLTCEKVSQRDEIFLDLSVDLEQHSSVTSCLRKFSAEEMLCERNKFHCDNCGGLQEAEKRMKIKRLPRILALHLKRFKYTEDLQRLQKLFHRVVYPYHLRLFNTTDDAEDPDRLYELYAVVVHIGGGPYHGHYVAIIKTEDRGWLLFDDELVEPVDKNYVRNFFGDKPGLACAYVLFYQETTLEAVMKEQEQENMESNLSATDTNEAALKPNGSSPSHLAHVHSASYIPSLEEHNRPNGLKRAPTAPQLSTHHEHGDPESGAFSPVTATPPVPPIPEHLSAAPIPPKSDVQGKKERAREEKERKAAEKEREKAEKLRRKEQEARAKENQRREEAELKAALEASKASKAQEDRRQSPDHGKDKLGGGLSRLKRGSKSFSQRLGKDKETRSVSSLEAPPLPIPGHPISRDGPIPEQHQQQPDPKDDPFQDSHHPNKPMMKEDEQANHKDPKHERTGHGKWRSFSLRKKSFSILS.

The tract at residues 1-28 (MGSFLRSFRNNAGSTTPSVGAVPAKKEV) is disordered. Residues 8–18 (FRNNAGSTTPS) are compositionally biased toward polar residues. The 415-residue stretch at 55-469 (YGMENYGNTC…CAYVLFYQET (415 aa)) folds into the USP domain. Cys64 serves as the catalytic Nucleophile. Disordered regions lie at residues 114–146 (AEAQAEKQRAANAQRPGMPPAQPQKPEDKDSPD) and 242–270 (PAAIEKSLPAPDHAETVDQSASSGSKTPN). Residues 258 to 270 (VDQSASSGSKTPN) are compositionally biased toward polar residues. His420 serves as the catalytic Proton acceptor. Residues 520-760 (EEHNRPNGLK…LRKKSFSILS (241 aa)) are disordered. A coiled-coil region spans residues 575–635 (KSDVQGKKER…AALEASKASK (61 aa)). Basic and acidic residues-rich tracts occupy residues 578-626 (VQGK…ELKA), 635-651 (KAQEDRRQSPDHGKDKL), and 708-742 (DPKDDPFQDSHHPNKPMMKEDEQANHKDPKHERTG). Residues 743–760 (HGKWRSFSLRKKSFSILS) are compositionally biased toward basic residues.

It belongs to the peptidase C19 family. In terms of assembly, interacts with creA, creC and qutD.

It carries out the reaction Thiol-dependent hydrolysis of ester, thioester, amide, peptide and isopeptide bonds formed by the C-terminal Gly of ubiquitin (a 76-residue protein attached to proteins as an intracellular targeting signal).. Functionally, ubiquitin thioesterase component of the regulatory network controlling carbon source utilization through ubiquitination and deubiquitination involving creA, creB, creC, creD and acrB. Deubiquitinates the creA catabolic repressor and the quinate permease qutD. Also plays a role in response to carbon starvation and the control of extracellular proteases activity. The polypeptide is Probable ubiquitin carboxyl-terminal hydrolase creB (creB) (Aspergillus clavatus (strain ATCC 1007 / CBS 513.65 / DSM 816 / NCTC 3887 / NRRL 1 / QM 1276 / 107)).